Reading from the N-terminus, the 436-residue chain is GTPase Der (436 aa).

EngA-type G domains lie at Pro-4–Glu-167 and Ile-175–Asn-351. Residues Gly-10–Ser-17, Asp-57–Ile-61, Asn-119–Asp-122, Gly-181–Ser-188, Asp-229–Met-233, and Asn-294–Asp-297 contribute to the GTP site. Residues Thr-352–Lys-436 enclose the KH-like domain.

Belongs to the TRAFAC class TrmE-Era-EngA-EngB-Septin-like GTPase superfamily. EngA (Der) GTPase family. Associates with the 50S ribosomal subunit.

GTPase that plays an essential role in the late steps of ribosome biogenesis. This is GTPase Der from Streptococcus suis (strain 98HAH33).